Consider the following 176-residue polypeptide: Peptide methionine sulfoxide reductase MsrA (176 aa).

The active site involves cysteine 10.

Belongs to the MsrA Met sulfoxide reductase family.

It catalyses the reaction L-methionyl-[protein] + [thioredoxin]-disulfide + H2O = L-methionyl-(S)-S-oxide-[protein] + [thioredoxin]-dithiol. It carries out the reaction [thioredoxin]-disulfide + L-methionine + H2O = L-methionine (S)-S-oxide + [thioredoxin]-dithiol. In terms of biological role, has an important function as a repair enzyme for proteins that have been inactivated by oxidation. Catalyzes the reversible oxidation-reduction of methionine sulfoxide in proteins to methionine. This chain is Peptide methionine sulfoxide reductase MsrA, found in Sulfolobus acidocaldarius (strain ATCC 33909 / DSM 639 / JCM 8929 / NBRC 15157 / NCIMB 11770).